We begin with the raw amino-acid sequence, 372 residues long: NAD(P)H-quinone oxidoreductase subunit 1 (372 aa).

The next 8 membrane-spanning stretches (helical) occupy residues 28-48 (IWLPLPLLLMIIGATVGVLVV), 97-117 (WLFTLGPALVVIPVFLSYLIV), 130-150 (VGIFLWISLSSIAPIGLLMSG), 176-196 (LALAVLAIAMMSNSLSTIDIV), 204-224 (ILGWNIWRQPVGFLIFWIAAL), 265-285 (LVLSALIVSILYLGGWEFPIP), 308-328 (SLGIIMTLVKTYALVFIAVLL), and 351-371 (VALVNLLLTAALKLAFPIAFG).

It belongs to the complex I subunit 1 family. NDH-1 is composed of at least 11 different subunits.

Its subcellular location is the cellular thylakoid membrane. It catalyses the reaction a plastoquinone + NADH + (n+1) H(+)(in) = a plastoquinol + NAD(+) + n H(+)(out). It carries out the reaction a plastoquinone + NADPH + (n+1) H(+)(in) = a plastoquinol + NADP(+) + n H(+)(out). NDH-1 shuttles electrons from an unknown electron donor, via FMN and iron-sulfur (Fe-S) centers, to quinones in the respiratory and/or the photosynthetic chain. The immediate electron acceptor for the enzyme in this species is believed to be plastoquinone. Couples the redox reaction to proton translocation, and thus conserves the redox energy in a proton gradient. The sequence is that of NAD(P)H-quinone oxidoreductase subunit 1 from Picosynechococcus sp. (strain ATCC 27264 / PCC 7002 / PR-6) (Agmenellum quadruplicatum).